The following is a 126-amino-acid chain: Holo-[acyl-carrier-protein] synthase (126 aa).

Mg(2+)-binding residues include Asp-9 and Glu-58.

Belongs to the P-Pant transferase superfamily. AcpS family. Requires Mg(2+) as cofactor.

It localises to the cytoplasm. It catalyses the reaction apo-[ACP] + CoA = holo-[ACP] + adenosine 3',5'-bisphosphate + H(+). In terms of biological role, transfers the 4'-phosphopantetheine moiety from coenzyme A to a Ser of acyl-carrier-protein. This chain is Holo-[acyl-carrier-protein] synthase, found in Shewanella frigidimarina (strain NCIMB 400).